The sequence spans 56 residues: UPF0434 protein ECH_0194 (56 aa).

The protein belongs to the UPF0434 family.

In Ehrlichia chaffeensis (strain ATCC CRL-10679 / Arkansas), this protein is UPF0434 protein ECH_0194.